The primary structure comprises 261 residues: Ribonuclease HII (261 aa).

One can recognise an RNase H type-2 domain in the interval 71 to 259; the sequence is KYIAGVDEVG…VKEAKLHFDS (189 aa). Positions 77, 78, and 169 each coordinate a divalent metal cation.

This sequence belongs to the RNase HII family. The cofactor is Mn(2+). Requires Mg(2+) as cofactor.

It localises to the cytoplasm. It catalyses the reaction Endonucleolytic cleavage to 5'-phosphomonoester.. Its function is as follows. Endonuclease that specifically degrades the RNA of RNA-DNA hybrids. The chain is Ribonuclease HII from Listeria monocytogenes serotype 4b (strain F2365).